We begin with the raw amino-acid sequence, 84 residues long: Large ribosomal subunit protein bL27 (84 aa).

The interval 1–21 is disordered; the sequence is MAHKKAGGSTRNGRDSNPKYL.

Belongs to the bacterial ribosomal protein bL27 family.

The polypeptide is Large ribosomal subunit protein bL27 (Francisella tularensis subsp. holarctica (strain FTNF002-00 / FTA)).